Here is a 316-residue protein sequence, read N- to C-terminus: Olfactory receptor 2H1 (316 aa).

Residues 1–23 (MVNQSSPMGFLLLGFSEHPALER) are Extracellular-facing. N-linked (GlcNAc...) asparagine glycosylation occurs at Asn3. The helical transmembrane segment at 24–47 (TLFVVVFTSYLLTLVGNTLIILLS) threads the bilayer. At 48–55 (VLYPRLHS) the chain is on the cytoplasmic side. Residues 56 to 77 (PMYFFLSDLSFLDLCFTTSCVP) traverse the membrane as a helical segment. Topologically, residues 78–98 (QMLVNLWGPKKTISFLGCSVQ) are extracellular. The cysteines at positions 95 and 187 are disulfide-linked. Residues 99–118 (LFIFLSLGTTECILLTVMAF) traverse the membrane as a helical segment. The Cytoplasmic portion of the chain corresponds to 119–137 (DRYVAVCQPLHYATIIHPR). A helical transmembrane segment spans residues 138 to 156 (LCWQLASVAWVMSLVQSIV). Residues 157–193 (QTPSTLHLPFCPHQQIDDFLCEVPSLIRLSCGDTSYN) lie on the Extracellular side of the membrane. The chain crosses the membrane as a helical span at residues 194-217 (EIQLAVSSVIFVVVPLSLILASYG). Residues 218–234 (ATAQAVLRINSATAWRK) lie on the Cytoplasmic side of the membrane. A helical transmembrane segment spans residues 235–257 (AFGTCSSHLTVVTLFYSSVIAVY). The Extracellular segment spans residues 258–270 (LQPKNPYAQGRGK). The helical transmembrane segment at 271–290 (FFGLFYAVGTPSLNPLVYTL) threads the bilayer. Residues 291-316 (RNKEIKRALRRLLGKERDSRESWRAA) lie on the Cytoplasmic side of the membrane.

This sequence belongs to the G-protein coupled receptor 1 family.

It localises to the cell membrane. In terms of biological role, odorant receptor. In Homo sapiens (Human), this protein is Olfactory receptor 2H1 (OR2H1).